Consider the following 223-residue polypeptide: Mating-type protein ALPHA2 (223 aa).

The segment at residues 151 to 213 is a DNA-binding region (homeobox; TALE-type); sequence EFKKGKRFLK…NRRRKDKITE (63 aa).

Belongs to the TALE/M-ATYP homeobox family. As to quaternary structure, forms a heterodimer with A1.

It is found in the nucleus. Functionally, mating type proteins are sequence specific DNA-binding proteins that act as master switches in yeast differentiation by controlling gene expression in a cell type-specific fashion. Transcriptional corepressor that acts in conjunction with A1 to repress transcription of haploid-specific genes. This Kluyveromyces lactis (strain ATCC 8585 / CBS 2359 / DSM 70799 / NBRC 1267 / NRRL Y-1140 / WM37) (Yeast) protein is Mating-type protein ALPHA2 (HMLALPHA2).